A 261-amino-acid chain; its full sequence is Imidazole glycerol phosphate synthase subunit HisF (261 aa).

Residues D16 and D135 contribute to the active site.

The protein belongs to the HisA/HisF family. Heterodimer of HisH and HisF.

The protein resides in the cytoplasm. It catalyses the reaction 5-[(5-phospho-1-deoxy-D-ribulos-1-ylimino)methylamino]-1-(5-phospho-beta-D-ribosyl)imidazole-4-carboxamide + L-glutamine = D-erythro-1-(imidazol-4-yl)glycerol 3-phosphate + 5-amino-1-(5-phospho-beta-D-ribosyl)imidazole-4-carboxamide + L-glutamate + H(+). Its pathway is amino-acid biosynthesis; L-histidine biosynthesis; L-histidine from 5-phospho-alpha-D-ribose 1-diphosphate: step 5/9. Its function is as follows. IGPS catalyzes the conversion of PRFAR and glutamine to IGP, AICAR and glutamate. The HisF subunit catalyzes the cyclization activity that produces IGP and AICAR from PRFAR using the ammonia provided by the HisH subunit. The protein is Imidazole glycerol phosphate synthase subunit HisF of Mycobacterium ulcerans (strain Agy99).